Here is a 237-residue protein sequence, read N- to C-terminus: Ribonuclease PH (237 aa).

Residues Arg-86 and 124 to 126 (GTR) contribute to the phosphate site.

The protein belongs to the RNase PH family. As to quaternary structure, homohexameric ring arranged as a trimer of dimers.

The catalysed reaction is tRNA(n+1) + phosphate = tRNA(n) + a ribonucleoside 5'-diphosphate. Functionally, phosphorolytic 3'-5' exoribonuclease that plays an important role in tRNA 3'-end maturation. Removes nucleotide residues following the 3'-CCA terminus of tRNAs; can also add nucleotides to the ends of RNA molecules by using nucleoside diphosphates as substrates, but this may not be physiologically important. Probably plays a role in initiation of 16S rRNA degradation (leading to ribosome degradation) during starvation. This is Ribonuclease PH from Bradyrhizobium sp. (strain ORS 278).